Consider the following 298-residue polypeptide: Multifunctional dioxygenase ausE (298 aa).

Substrate-binding residues include arginine 72 and glutamine 127. Fe cation-binding residues include histidine 130 and aspartate 132. Threonine 167 contributes to the substrate binding site. Histidine 214 contributes to the Fe cation binding site. Substrate is bound at residue arginine 226.

It belongs to the PhyH family. Homodimer. Fe cation serves as cofactor.

The catalysed reaction is preaustinoid A1 + 2-oxoglutarate + O2 = preaustinoid A2 + succinate + CO2 + H2O. The enzyme catalyses preaustinoid A2 + 2-oxoglutarate + O2 = preaustinoid A3 + succinate + CO2 + H2O. It carries out the reaction berkeleyone A + 2-oxoglutarate + O2 = preaustinoid A + succinate + CO2 + H2O. The protein operates within secondary metabolite biosynthesis; terpenoid biosynthesis. Its function is as follows. Multifunctional dioxygenase; part of the gene cluster that mediates the biosynthesis of calidodehydroaustin, a fungal meroterpenoid. The first step of the pathway is the synthesis of 3,5-dimethylorsellinic acid by the polyketide synthase ausA. 3,5-dimethylorsellinic acid is then prenylated by the polyprenyl transferase ausN. Further epoxidation by the FAD-dependent monooxygenase ausM and cyclization by the probable terpene cyclase ausL lead to the formation of protoaustinoid A. Protoaustinoid A is then oxidized to spiro-lactone preaustinoid A3 by the combined action of the FAD-binding monooxygenases ausB and ausC, and the dioxygenase ausE. Acid-catalyzed keto-rearrangement and ring contraction of the tetraketide portion of preaustinoid A3 by ausJ lead to the formation of preaustinoid A4. The aldo-keto reductase ausK, with the help of ausH, is involved in the next step by transforming preaustinoid A4 into isoaustinone which is in turn hydroxylated by the P450 monooxygenase ausI to form austinolide. The cytochrome P450 monooxygenase ausG modifies austinolide to austinol. Austinol is further acetylated to austin by the O-acetyltransferase ausP, which spontaneously changes to dehydroaustin. The cytochrome P450 monooxygenase ausR then converts dehydroaustin is into 7-dehydrodehydroaustin. The hydroxylation catalyzed by ausR permits the O-acetyltransferase ausQ to add an additional acetyl group to the molecule, leading to the formation of acetoxydehydroaustin. The short chain dehydrogenase ausT catalyzes the reduction of the double bond present between carbon atoms 1 and 2 to convert 7-dehydrodehydroaustin into 1,2-dihydro-7-hydroxydehydroaustin. AusQ catalyzes not only an acetylation reaction but also the addition of the PKS ausV diketide product to 1,2-dihydro-7-hydroxydehydroaustin, forming precalidodehydroaustin. Finally, the iron/alpha-ketoglutarate-dependent dioxygenase converts precalidodehydroaustin into calidodehydroaustin. This chain is Multifunctional dioxygenase ausE, found in Aspergillus calidoustus.